The sequence spans 372 residues: Glutamate 5-kinase (372 aa).

K14 contributes to the ATP binding site. S54, D141, and N153 together coordinate substrate. ATP is bound by residues 173–174 (TD) and 215–221 (TGGMLTK). In terms of domain architecture, PUA spans 280–358 (AGRLVLDDGA…RDIERLLGYV (79 aa)).

This sequence belongs to the glutamate 5-kinase family.

It localises to the cytoplasm. It catalyses the reaction L-glutamate + ATP = L-glutamyl 5-phosphate + ADP. It participates in amino-acid biosynthesis; L-proline biosynthesis; L-glutamate 5-semialdehyde from L-glutamate: step 1/2. Functionally, catalyzes the transfer of a phosphate group to glutamate to form L-glutamate 5-phosphate. The chain is Glutamate 5-kinase from Laribacter hongkongensis (strain HLHK9).